The chain runs to 251 residues: 5'-nucleotidase SurE (251 aa).

A divalent metal cation is bound by residues D8, D9, S42, and N94.

This sequence belongs to the SurE nucleotidase family. Requires a divalent metal cation as cofactor.

It localises to the cytoplasm. It carries out the reaction a ribonucleoside 5'-phosphate + H2O = a ribonucleoside + phosphate. Nucleotidase that shows phosphatase activity on nucleoside 5'-monophosphates. The sequence is that of 5'-nucleotidase SurE from Hydrogenovibrio crunogenus (strain DSM 25203 / XCL-2) (Thiomicrospira crunogena).